Reading from the N-terminus, the 256-residue chain is Small ribosomal subunit protein uS2 (256 aa).

The protein belongs to the universal ribosomal protein uS2 family.

The polypeptide is Small ribosomal subunit protein uS2 (Methylococcus capsulatus (strain ATCC 33009 / NCIMB 11132 / Bath)).